Consider the following 437-residue polypeptide: tRNA-2-methylthio-N(6)-dimethylallyladenosine synthase (437 aa).

The MTTase N-terminal domain maps to 5–121 (KKLYIKTYGC…LPELTARAAT (117 aa)). The [4Fe-4S] cluster site is built by Cys-14, Cys-50, Cys-84, Cys-159, Cys-163, and Cys-166. In terms of domain architecture, Radical SAM core spans 145–371 (AKRGPTAFLT…QALLTRQQRA (227 aa)). Positions 374–436 (DAKVGTTARV…ANSLRGVLIA (63 aa)) constitute a TRAM domain.

This sequence belongs to the methylthiotransferase family. MiaB subfamily. In terms of assembly, monomer. It depends on [4Fe-4S] cluster as a cofactor.

Its subcellular location is the cytoplasm. It carries out the reaction N(6)-dimethylallyladenosine(37) in tRNA + (sulfur carrier)-SH + AH2 + 2 S-adenosyl-L-methionine = 2-methylsulfanyl-N(6)-dimethylallyladenosine(37) in tRNA + (sulfur carrier)-H + 5'-deoxyadenosine + L-methionine + A + S-adenosyl-L-homocysteine + 2 H(+). In terms of biological role, catalyzes the methylthiolation of N6-(dimethylallyl)adenosine (i(6)A), leading to the formation of 2-methylthio-N6-(dimethylallyl)adenosine (ms(2)i(6)A) at position 37 in tRNAs that read codons beginning with uridine. This chain is tRNA-2-methylthio-N(6)-dimethylallyladenosine synthase, found in Dinoroseobacter shibae (strain DSM 16493 / NCIMB 14021 / DFL 12).